The sequence spans 213 residues: Small ribosomal subunit protein uS3 (213 aa).

A KH type-2 domain is found at 38–106; sequence IRKYVKKTLY…EFSIEVNEIR (69 aa).

It belongs to the universal ribosomal protein uS3 family. Part of the 30S ribosomal subunit. Forms a tight complex with proteins S10 and S14.

Functionally, binds the lower part of the 30S subunit head. Binds mRNA in the 70S ribosome, positioning it for translation. The sequence is that of Small ribosomal subunit protein uS3 from Oleidesulfovibrio alaskensis (strain ATCC BAA-1058 / DSM 17464 / G20) (Desulfovibrio alaskensis).